Consider the following 401-residue polypeptide: Formate-dependent phosphoribosylglycinamide formyltransferase (401 aa).

Residues 22–23 (EL) and Glu-82 contribute to the N(1)-(5-phospho-beta-D-ribosyl)glycinamide site. ATP is bound by residues Arg-115, Lys-157, 162–167 (SSGKGQ), 197–200 (EGFI), and Glu-205. Residues 120-315 (RLAAESLGLP…EFELHARAIL (196 aa)) form the ATP-grasp domain. Mg(2+)-binding residues include Glu-274 and Glu-286. Residues Asp-293, Lys-362, and 369 to 370 (RR) contribute to the N(1)-(5-phospho-beta-D-ribosyl)glycinamide site.

This sequence belongs to the PurK/PurT family. In terms of assembly, homodimer.

It carries out the reaction N(1)-(5-phospho-beta-D-ribosyl)glycinamide + formate + ATP = N(2)-formyl-N(1)-(5-phospho-beta-D-ribosyl)glycinamide + ADP + phosphate + H(+). The protein operates within purine metabolism; IMP biosynthesis via de novo pathway; N(2)-formyl-N(1)-(5-phospho-D-ribosyl)glycinamide from N(1)-(5-phospho-D-ribosyl)glycinamide (formate route): step 1/1. In terms of biological role, involved in the de novo purine biosynthesis. Catalyzes the transfer of formate to 5-phospho-ribosyl-glycinamide (GAR), producing 5-phospho-ribosyl-N-formylglycinamide (FGAR). Formate is provided by PurU via hydrolysis of 10-formyl-tetrahydrofolate. This is Formate-dependent phosphoribosylglycinamide formyltransferase from Cupriavidus necator (strain ATCC 17699 / DSM 428 / KCTC 22496 / NCIMB 10442 / H16 / Stanier 337) (Ralstonia eutropha).